Here is a 485-residue protein sequence, read N- to C-terminus: 1-aminocyclopropane-1-carboxylate synthase 2 (485 aa).

Substrate is bound by residues Glu55 and Tyr92. At Lys278 the chain carries N6-(pyridoxal phosphate)lysine. The residue at position 460 (Ser460) is a Phosphoserine.

The protein belongs to the class-I pyridoxal-phosphate-dependent aminotransferase family. In terms of assembly, homodimer and heterodimer. In vivo, the relevance of heterodimerization with other ACS enzymes is however unsure. The cofactor is pyridoxal 5'-phosphate. In terms of processing, phosphorylated on Ser 460; phosphorylation may regulate its turnover. May be processed at its C-terminus.

The catalysed reaction is S-adenosyl-L-methionine = 1-aminocyclopropane-1-carboxylate + S-methyl-5'-thioadenosine + H(+). Its pathway is alkene biosynthesis; ethylene biosynthesis via S-adenosyl-L-methionine; ethylene from S-adenosyl-L-methionine: step 1/2. Its function is as follows. 1-aminocyclopropane-1-carboxylate synthase (ACS) enzymes catalyze the conversion of S-adenosyl-L-methionine (SAM) into 1-aminocyclopropane-1-carboxylate (ACC), a direct precursor of ethylene. The sequence is that of 1-aminocyclopropane-1-carboxylate synthase 2 (ACS2) from Solanum lycopersicum (Tomato).